The primary structure comprises 591 residues: Glutathione S-transferase T2 (591 aa).

A GST N-terminal domain is found at 1 to 82; sequence MKLKVYADRM…YLSSAYASVV (82 aa). Glutathione contacts are provided by residues 11-12, 40-41, 53-54, and 66-67; these read SQ, QL, KV, and ES. The 138-residue stretch at 89–226 folds into the GST C-terminal domain; it reads DLSKRAKIHS…EVLFRAKDRF (138 aa). The disordered stretch occupies residues 229–272; the sequence is QREMATASKPGPQSKIIQFSSIGGTSDGPNLVQDTTDRKARRRK. The span at 243 to 262 shows a compositional bias: polar residues; that stretch reads KIIQFSSIGGTSDGPNLVQD. In terms of domain architecture, Myb-like spans 265–338; the sequence is DRKARRRKWS…HCRQRWRKIN (74 aa).

Belongs to the GST superfamily. Theta family.

Its subcellular location is the peroxisome. The catalysed reaction is RX + glutathione = an S-substituted glutathione + a halide anion + H(+). In terms of biological role, may be involved in the conjugation of reduced glutathione to a wide number of exogenous and endogenous hydrophobic electrophiles and have a detoxification role against certain herbicides. The protein is Glutathione S-transferase T2 (GSTT2) of Arabidopsis thaliana (Mouse-ear cress).